Consider the following 420-residue polypeptide: UDP-N-acetyl-D-mannosamine dehydrogenase (420 aa).

5 residues coordinate NAD(+): Tyr13, Ile14, Asp33, Thr85, and Thr126. 8 residues coordinate UDP-N-acetyl-alpha-D-mannosaminouronate: Arg160, Val161, Lys212, Asn216, Arg219, His250, Arg252, and Gly263. The Proton donor/acceptor role is filled by Lys212. Cys266 (nucleophile) is an active-site residue. 2 residues coordinate UDP-N-acetyl-alpha-D-mannosaminouronate: Phe330 and Lys331. Arg338 contributes to the NAD(+) binding site. Lys416 contacts UDP-N-acetyl-alpha-D-mannosaminouronate.

Belongs to the UDP-glucose/GDP-mannose dehydrogenase family. WecC subfamily. As to quaternary structure, homodimer.

The enzyme catalyses UDP-N-acetyl-alpha-D-mannosamine + 2 NAD(+) + H2O = UDP-N-acetyl-alpha-D-mannosaminouronate + 2 NADH + 3 H(+). Its pathway is bacterial outer membrane biogenesis; enterobacterial common antigen biosynthesis. Its function is as follows. Catalyzes the four-electron oxidation of UDP-N-acetyl-D-mannosamine (UDP-ManNAc), reducing NAD(+) and releasing UDP-N-acetylmannosaminuronic acid (UDP-ManNAcA). The polypeptide is UDP-N-acetyl-D-mannosamine dehydrogenase (Yersinia pestis).